The sequence spans 152 residues: MVKAVAVLGSSEGVKGTIFFTQEGDGPTTVTGSVSGLKPGLHGFHVHALGDTTNGCMSTGPHYNPASKEHGAPEDENRHAGDLGNVTAGADGVANINVTDSQIPLTGPNSIIGRAVVVHADPDDLGKGGHELSKSTGNAGGRVACGIIGLQG.

The Cu cation site is built by His-45, His-47, and His-62. A disulfide bridge links Cys-56 with Cys-145. Zn(2+)-binding residues include His-62, His-70, His-79, and Asp-82. His-119 is a Cu cation binding site.

This sequence belongs to the Cu-Zn superoxide dismutase family. As to quaternary structure, homodimer. Requires Cu cation as cofactor. It depends on Zn(2+) as a cofactor.

It is found in the cytoplasm. The enzyme catalyses 2 superoxide + 2 H(+) = H2O2 + O2. Destroys radicals which are normally produced within the cells and which are toxic to biological systems. This chain is Superoxide dismutase [Cu-Zn] 4A (SODCC.3), found in Zea mays (Maize).